A 625-amino-acid polypeptide reads, in one-letter code: RecQ-mediated genome instability protein 1 (625 aa).

M1 bears the N-acetylmethionine mark. Phosphoserine is present on S225. The segment at 257 to 282 (LTANNDTSSERCFTTGSSSNTIPTRQ) is disordered. Phosphoserine is present on residues S284 and S292. Residues K334, K387, and K426 each participate in a glycyl lysine isopeptide (Lys-Gly) (interchain with G-Cter in SUMO2) cross-link.

It belongs to the RMI1 family. Component of the RMI complex, containing at least TOP3A, RMI1 and RMI2. The RMI complex interacts with BLM. Directly interacts with RMI2 and TOP3A. May bind DHJ. Interacts (via N-terminal region) with BLM; the interaction is direct.

The protein localises to the nucleus. In terms of biological role, essential component of the RMI complex, a complex that plays an important role in the processing of homologous recombination intermediates to limit DNA crossover formation in cells. Promotes TOP3A binding to double Holliday junctions (DHJ) and hence stimulates TOP3A-mediated dissolution. Required for BLM phosphorylation during mitosis. Within the BLM complex, required for BLM and TOP3A stability. This Homo sapiens (Human) protein is RecQ-mediated genome instability protein 1 (RMI1).